We begin with the raw amino-acid sequence, 1363 residues long: Tonsoku-like protein (1363 aa).

8 TPR repeats span residues 27–60 (AAYC…LESV), 67–100 (AVAH…AGSL), 107–147 (QRAW…VDEK), 162–195 (TRLY…AEQN), 202–235 (FRAR…ARAM), 242–275 (SECC…GSQK), 311–344 (MAIC…AELL), and 352–385 (AVIH…RKGN). Residues 460-511 (SMAKDTEEEEEEEEEEEEEASEAPETSELELSESEDDADGLSQQLEEDEELQ) are disordered. Over residues 465–510 (TEEEEEEEEEEEEEASEAPETSELELSESEDDADGLSQQLEEDEEL) the composition is skewed to acidic residues. ANK repeat units follow at residues 528-557 (MGET…PLNP), 561-590 (CGWT…AVDD), and 597-626 (DGIT…SVTL). Positions 662-786 (ERLQMASSGQ…KSRETATSSA (125 aa)) are disordered. Positions 666 to 684 (MASSGQASRSSPALQTIPS) are enriched in polar residues. The span at 692–713 (TSPPSSPCPEPSSYTPRPPEAS) shows a compositional bias: pro residues. Basic and acidic residues predominate over residues 771–780 (KIPDPPKSRE). An Omega-N-methylarginine modification is found at Arg-796. Disordered regions lie at residues 841-866 (PLTR…RTRV) and 883-909 (AGDG…KENY). Polar residues predominate over residues 842 to 853 (LTRSGRPSTSVS). LRR repeat units follow at residues 1060-1081 (ALRE…ELLA), 1088-1108 (NLVL…RQLV), 1119-1140 (NLEE…ALAS), 1147-1168 (MLST…SHQA), 1179-1199 (HLKT…ARVL), 1206-1214 (TLKRLDLSS), 1238-1261 (ALAH…SRCL), 1266-1287 (SLTS…EELL), 1296-1317 (GLSF…DLWD), and 1322-1343 (QLQE…SVCQ).

This sequence belongs to the Tonsoku family. In terms of assembly, component of the MMS22L-TONSL complex, a complex at least composed of MMS22L and TONSL/NFKBIL2. Interacts with the MCM complex, the FACT complex and the RPA complex. Interacts with MCM5; the interaction is direct. Binds histones, with a strong preference for histone H3.1 (histones H3.1 and H3-4/H3.1t). Interacts (via ANK repeats) with histone H4; specifically binds histone H4 lacking methylation at 'Lys-20' (H4K20me0). May interact with DNAJC9; the interaction seems to be histone-dependent.

The protein localises to the nucleus. Its subcellular location is the chromosome. It is found in the cytoplasm. Functionally, component of the MMS22L-TONSL complex, a complex that promotes homologous recombination-mediated repair of double-strand breaks (DSBs) at stalled or collapsed replication forks. The MMS22L-TONSL complex is required to maintain genome integrity during DNA replication. It mediates the assembly of RAD51 filaments on single-stranded DNA (ssDNA): the MMS22L-TONSL complex is recruited to DSBs following histone replacement by histone chaperones and eviction of the replication protein A complex (RPA/RP-A) from DSBs. Following recruitment to DSBs, the TONSL-MMS22L complex promotes recruitment of RAD51 filaments and subsequent homologous recombination. Within the complex, TONSL acts as a histone reader, which recognizes and binds newly synthesized histones following their replacement by histone chaperones. Specifically binds histone H4 lacking methylation at 'Lys-20' (H4K20me0) and histone H3.1. The protein is Tonsoku-like protein of Mus musculus (Mouse).